We begin with the raw amino-acid sequence, 58 residues long: 6.4 kDa protein (58 aa).

The protein is 6.4 kDa protein of Pseudomonas phage Pf3 (Bacteriophage Pf3).